A 191-amino-acid polypeptide reads, in one-letter code: Protein Ves (191 aa).

The protein belongs to the Ves family.

In Escherichia coli (strain SE11), this protein is Protein Ves.